The primary structure comprises 105 residues: Flagellar transcriptional regulator FlhD (105 aa).

The protein belongs to the FlhD family. As to quaternary structure, homodimer; disulfide-linked. Forms a heterohexamer composed of two FlhC and four FlhD subunits. Each FlhC binds a FlhD dimer, forming a heterotrimer, and a hexamer assembles by dimerization of two heterotrimers.

It localises to the cytoplasm. Its function is as follows. Functions in complex with FlhC as a master transcriptional regulator that regulates transcription of several flagellar and non-flagellar operons by binding to their promoter region. Activates expression of class 2 flagellar genes, including fliA, which is a flagellum-specific sigma factor that turns on the class 3 genes. Also regulates genes whose products function in a variety of physiological pathways. The polypeptide is Flagellar transcriptional regulator FlhD (Cupriavidus necator (strain ATCC 17699 / DSM 428 / KCTC 22496 / NCIMB 10442 / H16 / Stanier 337) (Ralstonia eutropha)).